The following is a 459-amino-acid chain: UDP-N-acetylmuramate--L-alanine ligase (459 aa).

Position 113-119 (113-119) interacts with ATP; that stretch reads GSHGKTS.

It belongs to the MurCDEF family.

It is found in the cytoplasm. It carries out the reaction UDP-N-acetyl-alpha-D-muramate + L-alanine + ATP = UDP-N-acetyl-alpha-D-muramoyl-L-alanine + ADP + phosphate + H(+). It participates in cell wall biogenesis; peptidoglycan biosynthesis. Its function is as follows. Cell wall formation. In Desulfotalea psychrophila (strain LSv54 / DSM 12343), this protein is UDP-N-acetylmuramate--L-alanine ligase.